Consider the following 274-residue polypeptide: Large ribosomal subunit protein uL2cz/uL2cy (274 aa).

2 disordered regions span residues 1–22 (MAIHLYKTSTPSTRNGAVDSQV) and 223–274 (MNPV…RRTK).

The protein belongs to the universal ribosomal protein uL2 family. In terms of assembly, part of the 50S ribosomal subunit.

It is found in the plastid. It localises to the chloroplast. The polypeptide is Large ribosomal subunit protein uL2cz/uL2cy (rpl2-A) (Phaseolus vulgaris (Kidney bean)).